Here is a 402-residue protein sequence, read N- to C-terminus: Elongation factor Tu (402 aa).

Residues 10–212 (KPHINIGTIG…AVDEYIPEPK (203 aa)) form the tr-type G domain. Residues 19 to 26 (GHVDHGKT) form a G1 region. Position 19-26 (19-26 (GHVDHGKT)) interacts with GTP. Mg(2+) is bound at residue T26. Residues 60–64 (GITIA) are G2. Residues 81 to 84 (DCPG) are G3. Residues 81–85 (DCPGH) and 136–139 (NKED) contribute to the GTP site. The interval 136–139 (NKED) is G4. The tract at residues 177-179 (SAF) is G5.

The protein belongs to the TRAFAC class translation factor GTPase superfamily. Classic translation factor GTPase family. EF-Tu/EF-1A subfamily. In terms of assembly, monomer.

The protein localises to the cytoplasm. It carries out the reaction GTP + H2O = GDP + phosphate + H(+). Functionally, GTP hydrolase that promotes the GTP-dependent binding of aminoacyl-tRNA to the A-site of ribosomes during protein biosynthesis. The polypeptide is Elongation factor Tu (Sulfurovum sp. (strain NBC37-1)).